A 139-amino-acid chain; its full sequence is Putative pre-16S rRNA nuclease (139 aa).

This sequence belongs to the YqgF nuclease family.

It localises to the cytoplasm. Its function is as follows. Could be a nuclease involved in processing of the 5'-end of pre-16S rRNA. This is Putative pre-16S rRNA nuclease from Streptococcus suis (strain 98HAH33).